The chain runs to 259 residues: Phosphate import ATP-binding protein PstB 1 (259 aa).

Residues 13–254 (IQVRGLEFFY…PSKTQTEDYI (242 aa)) enclose the ABC transporter domain. 45 to 52 (GPSGCGKS) contacts ATP.

The protein belongs to the ABC transporter superfamily. Phosphate importer (TC 3.A.1.7) family. As to quaternary structure, the complex is composed of two ATP-binding proteins (PstB), two transmembrane proteins (PstC and PstA) and a solute-binding protein (PstS).

It is found in the cell inner membrane. The catalysed reaction is phosphate(out) + ATP + H2O = ADP + 2 phosphate(in) + H(+). Its function is as follows. Part of the ABC transporter complex PstSACB involved in phosphate import. Responsible for energy coupling to the transport system. This Pseudomonas savastanoi pv. phaseolicola (strain 1448A / Race 6) (Pseudomonas syringae pv. phaseolicola (strain 1448A / Race 6)) protein is Phosphate import ATP-binding protein PstB 1.